Consider the following 179-residue polypeptide: Dual-action ribosomal maturation protein DarP (179 aa).

Belongs to the DarP family.

The protein resides in the cytoplasm. Functionally, member of a network of 50S ribosomal subunit biogenesis factors which assembles along the 30S-50S interface, preventing incorrect 23S rRNA structures from forming. Promotes peptidyl transferase center (PTC) maturation. This chain is Dual-action ribosomal maturation protein DarP, found in Photorhabdus laumondii subsp. laumondii (strain DSM 15139 / CIP 105565 / TT01) (Photorhabdus luminescens subsp. laumondii).